The sequence spans 204 residues: ATP-dependent Clp protease proteolytic subunit (204 aa).

The active-site Nucleophile is the Ser-102. Residue His-127 is part of the active site.

This sequence belongs to the peptidase S14 family. As to quaternary structure, fourteen ClpP subunits assemble into 2 heptameric rings which stack back to back to give a disk-like structure with a central cavity, resembling the structure of eukaryotic proteasomes.

It localises to the cytoplasm. The catalysed reaction is Hydrolysis of proteins to small peptides in the presence of ATP and magnesium. alpha-casein is the usual test substrate. In the absence of ATP, only oligopeptides shorter than five residues are hydrolyzed (such as succinyl-Leu-Tyr-|-NHMec, and Leu-Tyr-Leu-|-Tyr-Trp, in which cleavage of the -Tyr-|-Leu- and -Tyr-|-Trp bonds also occurs).. Functionally, cleaves peptides in various proteins in a process that requires ATP hydrolysis. Has a chymotrypsin-like activity. Plays a major role in the degradation of misfolded proteins. The polypeptide is ATP-dependent Clp protease proteolytic subunit (Neisseria meningitidis serogroup A / serotype 4A (strain DSM 15465 / Z2491)).